The following is a 187-amino-acid chain: Probable nicotinate-nucleotide adenylyltransferase (187 aa).

The protein belongs to the NadD family.

The enzyme catalyses nicotinate beta-D-ribonucleotide + ATP + H(+) = deamido-NAD(+) + diphosphate. Its pathway is cofactor biosynthesis; NAD(+) biosynthesis; deamido-NAD(+) from nicotinate D-ribonucleotide: step 1/1. Catalyzes the reversible adenylation of nicotinate mononucleotide (NaMN) to nicotinic acid adenine dinucleotide (NaAD). The protein is Probable nicotinate-nucleotide adenylyltransferase of Anaeromyxobacter dehalogenans (strain 2CP-1 / ATCC BAA-258).